Reading from the N-terminus, the 801-residue chain is Phosphatidylinositol 3-kinase pik3 (801 aa).

Residues 14–166 (VTARFLVKFC…RLDGLLLKLQ (153 aa)) form the C2 PI3K-type domain. Residues 257–439 (DKDLKPNSKI…SSVMFLFQKE (183 aa)) enclose the PIK helical domain. A PI3K/PI4K catalytic domain is found at 515–785 (IPDACTVFKS…LINDSVSALF (271 aa)). Positions 521 to 527 (VFKSTMQ) are G-loop. The segment at 654–662 (GVGDRHLDN) is catalytic loop. The segment at 673-694 (HADFGYILGRDPKLFSPAMKLS) is activation loop.

It belongs to the PI3/PI4-kinase family. Component of the autophagy-specific vps34 PI3-kinase complex I composed of vps15, atg6, pik3/vps34, atg14 and atg38. Also a component of the VPS34 PI3-kinase complex II composed of atg6, pik3, vps15 and vps38.

The catalysed reaction is a 1,2-diacyl-sn-glycero-3-phospho-(1D-myo-inositol) + ATP = a 1,2-diacyl-sn-glycero-3-phospho-(1D-myo-inositol-3-phosphate) + ADP + H(+). In terms of biological role, phosphatidylinositol 3-kinase that functions as a part of the autophagy-specific VPS34 PI3-kinase complex I that plays a role in autophagosome assembly. This complex is essential to recruit the atg8-phosphatidylinositol conjugate and the atg12-atg5 conjugate to the pre-autophagosomal structure. Also functions as part of the VPS34 PI3-kinase complex II. This is Phosphatidylinositol 3-kinase pik3 (pik3) from Schizosaccharomyces pombe (strain 972 / ATCC 24843) (Fission yeast).